We begin with the raw amino-acid sequence, 179 residues long: Cytochrome b6-f complex iron-sulfur subunit 1 (179 aa).

Residues 21-43 (LLTFGTVTGVALGALYPVVNYFI) traverse the membrane as a helical segment. The Rieske domain maps to 61–162 (GNDVSVSKFL…AKTENDKIVL (102 aa)). Cys108, His110, Cys126, and His129 together coordinate [2Fe-2S] cluster. An intrachain disulfide couples Cys113 to Cys128.

It belongs to the Rieske iron-sulfur protein family. The 4 large subunits of the cytochrome b6-f complex are cytochrome b6, subunit IV (17 kDa polypeptide, PetD), cytochrome f and the Rieske protein, while the 4 small subunits are PetG, PetL, PetM and PetN. The complex functions as a dimer. The cofactor is [2Fe-2S] cluster.

The protein localises to the cellular thylakoid membrane. The catalysed reaction is 2 oxidized [plastocyanin] + a plastoquinol + 2 H(+)(in) = 2 reduced [plastocyanin] + a plastoquinone + 4 H(+)(out). Functionally, component of the cytochrome b6-f complex, which mediates electron transfer between photosystem II (PSII) and photosystem I (PSI), cyclic electron flow around PSI, and state transitions. The protein is Cytochrome b6-f complex iron-sulfur subunit 1 of Nostoc sp. (strain PCC 7120 / SAG 25.82 / UTEX 2576).